Consider the following 114-residue polypeptide: Large ribosomal subunit protein uL22 (114 aa).

It belongs to the universal ribosomal protein uL22 family. In terms of assembly, part of the 50S ribosomal subunit.

Functionally, this protein binds specifically to 23S rRNA; its binding is stimulated by other ribosomal proteins, e.g. L4, L17, and L20. It is important during the early stages of 50S assembly. It makes multiple contacts with different domains of the 23S rRNA in the assembled 50S subunit and ribosome. Its function is as follows. The globular domain of the protein is located near the polypeptide exit tunnel on the outside of the subunit, while an extended beta-hairpin is found that lines the wall of the exit tunnel in the center of the 70S ribosome. The protein is Large ribosomal subunit protein uL22 of Mycoplasmopsis agalactiae (strain NCTC 10123 / CIP 59.7 / PG2) (Mycoplasma agalactiae).